Here is a 540-residue protein sequence, read N- to C-terminus: Putative rhamnogalacturonase (540 aa).

The signal sequence occupies residues 1-23 (MGFLTLFHMAFLAVSLFVSGALA). Cystine bridges form between Cys53/Cys100 and Cys192/Cys203. Asn89 carries an N-linked (GlcNAc...) asparagine glycan. N-linked (GlcNAc...) asparagine glycosylation is present at Asn368.

The protein belongs to the polysaccharide lyase 4 family.

Its subcellular location is the secreted. The catalysed reaction is Endotype eliminative cleavage of L-alpha-rhamnopyranosyl-(1-&gt;4)-alpha-D-galactopyranosyluronic acid bonds of rhamnogalacturonan I domains in ramified hairy regions of pectin leaving L-rhamnopyranose at the reducing end and 4-deoxy-4,5-unsaturated D-galactopyranosyluronic acid at the non-reducing end.. Could be a pectinolytic enzyme that hydrolyzes the alpha-L-rhamnopyranosyl-(1,4)-alpha-D-galacturonopyranosyl glycosidic linkage by beta-elimination, thereby generating oligosaccharides terminating at the non-reducing end with a hex-4-enopyranosyluronic acid residue. The polypeptide is Putative rhamnogalacturonase (asd-1) (Neurospora crassa (strain ATCC 24698 / 74-OR23-1A / CBS 708.71 / DSM 1257 / FGSC 987)).